A 1152-amino-acid polypeptide reads, in one-letter code: MNRIFKSIWCEQTRTWVAASEHAVARGGRASSVVASAGGLEKVLKLSILGAASLIAMGVVGPFAEEAMAANNAGVCLTYNGSSNNTSGTGGWFADGCKSAGWVQGMVTNSKTDWVGLTADDTQIVLDGSAGSIYFRTGGINGNVLTMSNATGGVLLSGLAAGVNPTDAVNMSQLTSLSTSTATGITSLSTSTATSIASLSTSMLSLGVGVVTQDASTGAISVGANSPGLTVDFAGGQGPRTLTGVAAGVNATDAVNVGQLASLSTSTAAGLSTAASGVASLSTSLLGAVGDLASLSTSASTGLATADSGIASLSTSLLGTADNVTSLSTSLSTVNANLAGLQTSVDNVVSYDDPSKSAITLGGAGVTTPVLLTNVAAGKIAATSTDAVNGSQLYTLQQEFSQQYDLLTSQVSSLSTSVSGLQGSVSANTGTASGDNSTASGDNATASGTNSTANGTNSTASGDNSTASGTNASASGENSTATGTDSTASGSNSTANGTNSTASGDNSTASGTNASATGENSTATGTDSTASGSNSTANGTNSTASGDNSTASGTNASASGENSTATGTDSTASGSNSTANGTNSTASGDNSTASGTNASATGENSTATGTDSTASGSNSTANGTNSTASGDNSTASGTNASATGENSTATGTDSTASGSNSTANGTNSTASGDNSTASGTNASATGENSTATGTDSTASGSNSTANGTNSTASGDNSTASGTNASATGENSTATGTDSTASGSNSTANGANSTASGDNSTASGTNASATGENSTATGTDSTASGSNSTANGTNSTASGNNSTASGTNASATGENSTATGTDSAASGTNSTANGTNSTASGDNSTASGTNASATGENSTATGTASTASGSNSTANGANSTASGAGATATGENAAATGAGATATGNNASASGTSSTAGGANAIASGENSTTNGANSTASGNGSSAFGESAAAAGDGSTALGANAVASGVGSVATGAGSVASGANSSAYGTGSNATGAGSVAIGQGATASGSNSVALGTGSVASEDNTVSVGSAGSERRITNVAAGVNATDAVNVGQLNSAVSGIRNQMDGMQGQIDTLARDAYSGIAAATALTMIPDVDPGKTLAVGIGTANFKGYQASALGATARITQNLKVKTGVSYSGSNYVWGAGMSYQW.

A signal peptide spans 1 to 71 (MNRIFKSIWC…PFAEEAMAAN (71 aa)). A surface exposed passenger domain region spans residues 72–1061 (NAGVCLTYNG…VGQLNSAVSG (990 aa)). Disordered regions lie at residues 420-886 (GLQG…AGAT) and 900-949 (TATG…ESAA). Residues 427–442 (ANTGTASGDNSTASGD) are compositionally biased toward polar residues. Over residues 443 to 504 (NATASGTNST…ANGTNSTASG (62 aa)) the composition is skewed to low complexity. Residues 505–519 (DNSTASGTNASATGE) show a composition bias toward polar residues. Residues 520 to 588 (NSTATGTDST…ANGTNSTASG (69 aa)) are compositionally biased toward low complexity. Residues 589–603 (DNSTASGTNASATGE) show a composition bias toward polar residues. The segment covering 604–630 (NSTATGTDSTASGSNSTANGTNSTASG) has biased composition (low complexity). Residues 631-645 (DNSTASGTNASATGE) are compositionally biased toward polar residues. A compositionally biased stretch (low complexity) spans 646–672 (NSTATGTDSTASGSNSTANGTNSTASG). The segment covering 673 to 687 (DNSTASGTNASATGE) has biased composition (polar residues). Residues 688-714 (NSTATGTDSTASGSNSTANGTNSTASG) are compositionally biased toward low complexity. Residues 715–729 (DNSTASGTNASATGE) show a composition bias toward polar residues. Residues 730 to 756 (NSTATGTDSTASGSNSTANGANSTASG) show a composition bias toward low complexity. The span at 757 to 771 (DNSTASGTNASATGE) shows a compositional bias: polar residues. 2 stretches are compositionally biased toward low complexity: residues 772 to 840 (NSTA…TASG) and 848 to 886 (TNAS…AGAT). The tract at residues 1062 to 1099 (IRNQMDGMQGQIDTLARDAYSGIAAATALTMIPDVDPG) is outer membrane translocation of the passenger domain. The interval 1100–1152 (KTLAVGIGTANFKGYQASALGATARITQNLKVKTGVSYSGSNYVWGAGMSYQW) is translocator domain.

This sequence belongs to the autotransporter-2 (AT-2) (TC 1.B.40) family. As to quaternary structure, homotrimer.

Its subcellular location is the cell surface. The protein localises to the cell outer membrane. Functionally, involved in virulence. Mediates adherence to human respiratory epithelial cells. The polypeptide is Autotransporter adhesin BpaC (Burkholderia pseudomallei (strain 1026b)).